Here is a 267-residue protein sequence, read N- to C-terminus: Ribosomal RNA small subunit methyltransferase J (267 aa).

S-adenosyl-L-methionine contacts are provided by residues 133-134 (ER) and Asp-187.

It belongs to the methyltransferase superfamily. RsmJ family.

The protein localises to the cytoplasm. It catalyses the reaction guanosine(1516) in 16S rRNA + S-adenosyl-L-methionine = N(2)-methylguanosine(1516) in 16S rRNA + S-adenosyl-L-homocysteine + H(+). Specifically methylates the guanosine in position 1516 of 16S rRNA. The protein is Ribosomal RNA small subunit methyltransferase J of Halorhodospira halophila (strain DSM 244 / SL1) (Ectothiorhodospira halophila (strain DSM 244 / SL1)).